An 85-amino-acid polypeptide reads, in one-letter code: Serine protease inhibitor Cvsi-2 (85 aa).

An N-terminal signal peptide occupies residues 1–18 (MKVAVVVALLCFVCYTAA).

In terms of processing, contains 6 disulfide bonds. Detected in hemolymph (at protein level). Within the digestive gland expression is limited to the basophil cells of the digestive diverticula.

It localises to the secreted. In terms of biological role, slow-binding inhibitor of serine proteases. The inhibitor rapidly binds to the protease forming a weak enzyme-inhibitor complex, and this is followed by a slow isomerization forming a tight-binding enzyme-inhibitor complex. Active against subtilisin A with a dissociation constant of 0.18 nM. Active against perkinsin. Not active against thermolysin, papain or pepsin. The sequence is that of Serine protease inhibitor Cvsi-2 from Crassostrea virginica (Eastern oyster).